A 336-amino-acid chain; its full sequence is Dihydroorotate dehydrogenase (quinone) (336 aa).

Residues 62 to 66 (AGLDK) and Thr86 contribute to the FMN site. Lys66 contributes to the substrate binding site. Residue 111 to 115 (NRMGF) participates in substrate binding. FMN is bound by residues Asn139 and Asn172. Asn172 lines the substrate pocket. Residue Ser175 is the Nucleophile of the active site. Asn177 contributes to the substrate binding site. FMN is bound by residues Lys217 and Thr245. 246–247 (NT) is a binding site for substrate. FMN-binding positions include Gly268, Gly297, and 318-319 (YS).

The protein belongs to the dihydroorotate dehydrogenase family. Type 2 subfamily. As to quaternary structure, monomer. FMN serves as cofactor.

The protein resides in the cell membrane. It carries out the reaction (S)-dihydroorotate + a quinone = orotate + a quinol. It participates in pyrimidine metabolism; UMP biosynthesis via de novo pathway; orotate from (S)-dihydroorotate (quinone route): step 1/1. Its function is as follows. Catalyzes the conversion of dihydroorotate to orotate with quinone as electron acceptor. This Citrobacter koseri (strain ATCC BAA-895 / CDC 4225-83 / SGSC4696) protein is Dihydroorotate dehydrogenase (quinone).